Reading from the N-terminus, the 474-residue chain is Ribosomal RNA small subunit methyltransferase F (474 aa).

S-adenosyl-L-methionine is bound by residues 121–127, Glu145, Asp172, and Asp190; that span reads ASAPGSK. The active-site Nucleophile is the Cys243.

The protein belongs to the class I-like SAM-binding methyltransferase superfamily. RsmB/NOP family.

It is found in the cytoplasm. It catalyses the reaction cytidine(1407) in 16S rRNA + S-adenosyl-L-methionine = 5-methylcytidine(1407) in 16S rRNA + S-adenosyl-L-homocysteine + H(+). Specifically methylates the cytosine at position 1407 (m5C1407) of 16S rRNA. In Shewanella piezotolerans (strain WP3 / JCM 13877), this protein is Ribosomal RNA small subunit methyltransferase F.